The following is a 101-amino-acid chain: Acylphosphatase (101 aa).

The 87-residue stretch at 12–98 (RVHVFVTGRV…EGLRGFEVKR (87 aa)) folds into the Acylphosphatase-like domain. Catalysis depends on residues Arg27 and Asn45.

It belongs to the acylphosphatase family.

It carries out the reaction an acyl phosphate + H2O = a carboxylate + phosphate + H(+). This Trichormus variabilis (strain ATCC 29413 / PCC 7937) (Anabaena variabilis) protein is Acylphosphatase (acyP).